The sequence spans 115 residues: Putative HNH nuclease YajD (115 aa).

The 49-residue stretch at 27–75 (CGRCSREFVYSNLRELTVHHIDHDHTNNPEDGSNWELLCLYCHDHEHSK) folds into the HNH domain.

It belongs to the HNH nuclease family.

The chain is Putative HNH nuclease YajD (yajD) from Escherichia coli O157:H7.